The chain runs to 179 residues: MLTRQQKELIVKEMSEIFKKTSLILFADFLGFTVADLTELRSRLREKYGDGARFRVVKNTLLNLALKNAEYEGYEEFLKGPTAVLYVTEGDPVEAVKIIYNFYKDKKADLSRLKGGFLEGKKFTAEEVENIAKLPSKEELYAMLVGRVKAPITGLVFALSGILRNLVYVLNAIKEKKSE.

The interval 137 to 179 (KEELYAMLVGRVKAPITGLVFALSGILRNLVYVLNAIKEKKSE) is binds L7/L12 dimers.

Part of the ribosomal stalk of the 50S ribosomal subunit. The N-terminus interacts with L11 and 23S rRNA to form the base of the stalk. The C-terminus forms an elongated spine to which 3 L12 dimers bind in a sequential fashion forming a heptameric L10(L12)2(L12)2(L12)2 complex.

Its function is as follows. Forms part of the ribosomal stalk, playing a central role in the interaction of the ribosome with GTP-bound translation factors (such as IF-2, EF-Tu, EF-G and RF3). This is Large ribosomal subunit protein uL10 (rplJ) from Thermotoga maritima (strain ATCC 43589 / DSM 3109 / JCM 10099 / NBRC 100826 / MSB8).